The chain runs to 310 residues: Serine/threonine-protein kinase pim-2 (310 aa).

Residues 30–290 enclose the Protein kinase domain; it reads YTMGNLLGSG…LEQILQHPWM (261 aa). ATP-binding positions include 36–44 and lysine 59; that span reads LGSGGFGSV. The active-site Proton acceptor is the aspartate 167.

The protein belongs to the protein kinase superfamily. CAMK Ser/Thr protein kinase family. PIM subfamily. Autophosphorylated.

It carries out the reaction L-seryl-[protein] + ATP = O-phospho-L-seryl-[protein] + ADP + H(+). The catalysed reaction is L-threonyl-[protein] + ATP = O-phospho-L-threonyl-[protein] + ADP + H(+). Proto-oncogene with serine/threonine kinase activity involved in cell survival and cell proliferation. The chain is Serine/threonine-protein kinase pim-2 (pim2) from Danio rerio (Zebrafish).